A 281-amino-acid chain; its full sequence is Probable catechol O-methyltransferase 2 (281 aa).

Ile-78, Glu-100, Ser-108, Glu-127, Val-128, Ala-156, and Asp-183 together coordinate S-adenosyl-L-methionine. Position 183 (Asp-183) interacts with Mg(2+). Substrate is bound at residue Lys-186. Asp-211 and Asn-212 together coordinate Mg(2+). Asn-212 lines the substrate pocket.

The protein belongs to the class I-like SAM-binding methyltransferase superfamily. Cation-dependent O-methyltransferase family. It depends on Mg(2+) as a cofactor.

The protein resides in the vacuole. It carries out the reaction a catechol + S-adenosyl-L-methionine = a guaiacol + S-adenosyl-L-homocysteine + H(+). This chain is Probable catechol O-methyltransferase 2, found in Schizosaccharomyces pombe (strain 972 / ATCC 24843) (Fission yeast).